The primary structure comprises 201 residues: Probable nicotinate-nucleotide adenylyltransferase (201 aa).

Residues 182 to 201 (GPESSQSATSIRERGGWSLR) are disordered. Positions 192-201 (IRERGGWSLR) are enriched in basic and acidic residues.

Belongs to the NadD family.

It carries out the reaction nicotinate beta-D-ribonucleotide + ATP + H(+) = deamido-NAD(+) + diphosphate. Its pathway is cofactor biosynthesis; NAD(+) biosynthesis; deamido-NAD(+) from nicotinate D-ribonucleotide: step 1/1. In terms of biological role, catalyzes the reversible adenylation of nicotinate mononucleotide (NaMN) to nicotinic acid adenine dinucleotide (NaAD). This chain is Probable nicotinate-nucleotide adenylyltransferase, found in Parvibaculum lavamentivorans (strain DS-1 / DSM 13023 / NCIMB 13966).